The primary structure comprises 64 residues: Conotoxin Tx3.5-a (64 aa).

The first 19 residues, 1-19, serve as a signal peptide directing secretion; sequence MSKLGVLLTICLLLFPLTA. Positions 20 to 47 are excised as a propeptide; that stretch reads LPLDGDQPADQAAERMQAEQHPLFDQKR. 3 cysteine pairs are disulfide-bonded: Cys-49–Cys-58, Cys-50–Cys-62, and Cys-54–Cys-63. Cys-63 is subject to Cysteine amide.

Belongs to the conotoxin M superfamily. Contains 3 disulfide bonds. Post-translationally, two peptides are produced from this precursor. Conotoxin Tx3.5-b is amidated at Cys-63, conotoxin Tx3.5-a has an unmodified C-terminus. As to expression, expressed by the venom duct. Is present in all duct parts with a highest content in part 2 (proximal of the venom bulb) and then decreases in concentration toward the end of the duct.

Its subcellular location is the secreted. The chain is Conotoxin Tx3.5-a from Conus textile (Cloth-of-gold cone).